Consider the following 231-residue polypeptide: NADH-ubiquinone oxidoreductase chain 4 (231 aa).

The next 7 membrane-spanning stretches (helical) occupy residues 1–21, 34–54, 61–80, 84–106, 128–148, 156–176, and 211–231; these read PIAGSMVLAAILLKLGGYGII, VFLPFIVLALWGAILANLTCL, SLIAYSSVSHMGLVVAAIII, WGLSGAMALMIAHGFTSSALFCL, ILPMATTWWLLINLMNIATPP, LLIISALFNWCPTTMIMLGLS, and LLMILHIIPLVLISMKPELVI.

This sequence belongs to the complex I subunit 4 family.

The protein localises to the mitochondrion membrane. The enzyme catalyses a ubiquinone + NADH + 5 H(+)(in) = a ubiquinol + NAD(+) + 4 H(+)(out). In terms of biological role, core subunit of the mitochondrial membrane respiratory chain NADH dehydrogenase (Complex I) that is believed to belong to the minimal assembly required for catalysis. Complex I functions in the transfer of electrons from NADH to the respiratory chain. The immediate electron acceptor for the enzyme is believed to be ubiquinone. The polypeptide is NADH-ubiquinone oxidoreductase chain 4 (MT-ND4) (Tropidolaemus wagleri (Wagler's pit viper)).